The sequence spans 362 residues: Erythritol/L-threitol dehydrogenase (362 aa).

Zn(2+) is bound by residues Cys45, His76, Glu77, Cys109, Cys112, Cys115, and Cys123. Residues Ile195 and Asp215 each contribute to the NAD(+) site.

The protein belongs to the zinc-containing alcohol dehydrogenase family. It depends on Zn(2+) as a cofactor.

The catalysed reaction is erythritol + NAD(+) = D-erythrulose + NADH + H(+). It catalyses the reaction L-threitol + NAD(+) = L-erythrulose + NADH + H(+). It participates in carbohydrate metabolism; erythritol degradation. Its pathway is carbohydrate metabolism; L-threitol degradation. Functionally, catalyzes the NAD-dependent reversible oxidation of erythritol and L-threitol. Involved in the degradation pathways of erythritol and L-threitol, that allow M.smegmatis to grow on these compounds as the sole carbon source. In Mycolicibacterium smegmatis (strain ATCC 700084 / mc(2)155) (Mycobacterium smegmatis), this protein is Erythritol/L-threitol dehydrogenase.